The primary structure comprises 576 residues: RNA-binding post-transcriptional regulator cip2 (576 aa).

Positions 232 to 310 (TAIVIKNIPF…RRLRVEWKRQ (79 aa)) constitute an RRM domain. One can recognise an R3H domain in the interval 355–420 (DPAILNVYSH…AKQVVITMPS (66 aa)).

In terms of assembly, interacts with csx1. Post-translationally, phosphorylated by sty1.

Its subcellular location is the cytoplasm. Its function is as follows. Regulates global gene expression after oxidative stress. Interacts and stabilizes mRNAs and may regulate their transition between different cytoplasmic components after oxidative stress. In Schizosaccharomyces pombe (strain 972 / ATCC 24843) (Fission yeast), this protein is RNA-binding post-transcriptional regulator cip2 (cip2).